Reading from the N-terminus, the 120-residue chain is UPF0344 protein BCAH187_A1308 (120 aa).

4 consecutive transmembrane segments (helical) span residues 6–26, 32–52, 64–84, and 91–111; these read ITAWALGLILFFVAYSLYSAG, VHMGLRLMYIIIIVTGVWLYL, WYGLKMLAGILVIAGMEMVLV, and ATGAFWGLFIIALVAVFYLGL.

The protein belongs to the UPF0344 family.

The protein localises to the cell membrane. This chain is UPF0344 protein BCAH187_A1308, found in Bacillus cereus (strain AH187).